The following is a 182-amino-acid chain: UPF0215 protein Pcal_0119 (182 aa).

Belongs to the UPF0215 family.

The polypeptide is UPF0215 protein Pcal_0119 (Pyrobaculum calidifontis (strain DSM 21063 / JCM 11548 / VA1)).